The primary structure comprises 170 residues: Cytochrome bc1 complex Rieske iron-sulfur subunit (170 aa).

The 91-residue stretch at 63-153 folds into the Rieske domain; it reads KAALMIIRLE…IGVNDEGYLE (91 aa). Residues Cys-96, His-98, Cys-115, and His-118 each contribute to the [2Fe-2S] cluster site. The cysteines at positions 101 and 117 are disulfide-linked.

In terms of assembly, the cytochrome bc1 complex is composed of a cytochrome b (QcrB), the Rieske iron-sulfur protein (QcrA) and a diheme cytochrome c (QcrC) subunit. The cofactor is [2Fe-2S] cluster.

It localises to the cell membrane. In terms of biological role, iron-sulfur subunit of the cytochrome bc1 complex, an essential component of the respiratory electron transport chain required for ATP synthesis. The bc1 complex catalyzes the oxidation of menaquinol and the reduction of cytochrome c in the respiratory chain. The bc1 complex operates through a Q-cycle mechanism that couples electron transfer to generation of the proton gradient that drives ATP synthesis. The chain is Cytochrome bc1 complex Rieske iron-sulfur subunit (qcrA) from Streptomyces lividans.